Here is a 370-residue protein sequence, read N- to C-terminus: NADH-quinone oxidoreductase subunit D (370 aa).

It belongs to the complex I 49 kDa subunit family. In terms of assembly, NDH-1 is composed of 14 different subunits. Subunits NuoB, C, D, E, F, and G constitute the peripheral sector of the complex.

The protein localises to the cell membrane. It catalyses the reaction a quinone + NADH + 5 H(+)(in) = a quinol + NAD(+) + 4 H(+)(out). NDH-1 shuttles electrons from NADH, via FMN and iron-sulfur (Fe-S) centers, to quinones in the respiratory chain. The immediate electron acceptor for the enzyme in this species is believed to be a menaquinone. Couples the redox reaction to proton translocation (for every two electrons transferred, four hydrogen ions are translocated across the cytoplasmic membrane), and thus conserves the redox energy in a proton gradient. This is NADH-quinone oxidoreductase subunit D from Desulfitobacterium hafniense (strain Y51).